A 359-amino-acid chain; its full sequence is Peptide chain release factor 1 (359 aa).

Position 235 is an N5-methylglutamine (Gln-235). A disordered region spans residues 283 to 309; the sequence is QKAESERSQARRSQVGSGDRSERIRTY.

It belongs to the prokaryotic/mitochondrial release factor family. Methylated by PrmC. Methylation increases the termination efficiency of RF1.

It localises to the cytoplasm. Peptide chain release factor 1 directs the termination of translation in response to the peptide chain termination codons UAG and UAA. This is Peptide chain release factor 1 from Brucella canis (strain ATCC 23365 / NCTC 10854 / RM-666).